Consider the following 370-residue polypeptide: DNA replication and repair protein RecF (370 aa).

33–40 serves as a coordination point for ATP; sequence GPNAAGKT.

The protein belongs to the RecF family.

Its subcellular location is the cytoplasm. Its function is as follows. The RecF protein is involved in DNA metabolism; it is required for DNA replication and normal SOS inducibility. RecF binds preferentially to single-stranded, linear DNA. It also seems to bind ATP. This Moorella thermoacetica (strain ATCC 39073 / JCM 9320) protein is DNA replication and repair protein RecF.